We begin with the raw amino-acid sequence, 340 residues long: Tryptophan--tRNA ligase (340 aa).

ATP contacts are provided by residues 11-13 (RPT) and 19-20 (GH). Positions 12 to 20 (PTGKLHLGH) match the 'HIGH' region motif. Aspartate 140 is an L-tryptophan binding site. Residues 152–154 (GND), leucine 194, and 202–206 (KMSKS) contribute to the ATP site. The 'KMSKS' region motif lies at 202–206 (KMSKS).

Belongs to the class-I aminoacyl-tRNA synthetase family. Homodimer.

It localises to the cytoplasm. It catalyses the reaction tRNA(Trp) + L-tryptophan + ATP = L-tryptophyl-tRNA(Trp) + AMP + diphosphate + H(+). Functionally, catalyzes the attachment of tryptophan to tRNA(Trp). This Streptococcus pyogenes serotype M1 protein is Tryptophan--tRNA ligase.